A 220-amino-acid chain; its full sequence is Adenylate kinase (220 aa).

An ATP-binding site is contributed by 12-17 (GAGKGT). Residues 32-62 (STGDIFRDIVKKENDELGKKIKEIMEKGELV) form an NMP region. Residues T33, R38, 60 to 62 (ELV), 88 to 91 (GYPR), and Q95 contribute to the AMP site. The tract at residues 129 to 166 (SRRICPKCGRIYNMISLPPKEDELCDDCKVKLVQRDDD) is LID. R130 serves as a coordination point for ATP. C133 and C136 together coordinate Zn(2+). 139–140 (IY) contributes to the ATP binding site. Zn(2+) is bound by residues C153 and C156. Residues R163 and R174 each contribute to the AMP site. I202 serves as a coordination point for ATP.

Belongs to the adenylate kinase family. As to quaternary structure, monomer.

Its subcellular location is the cytoplasm. It catalyses the reaction AMP + ATP = 2 ADP. It functions in the pathway purine metabolism; AMP biosynthesis via salvage pathway; AMP from ADP: step 1/1. Functionally, catalyzes the reversible transfer of the terminal phosphate group between ATP and AMP. Plays an important role in cellular energy homeostasis and in adenine nucleotide metabolism. The protein is Adenylate kinase of Thermotoga neapolitana.